Here is a 729-residue protein sequence, read N- to C-terminus: 1,4-alpha-glucan branching enzyme GlgB 2 (729 aa).

D408 acts as the Nucleophile in catalysis. The Proton donor role is filled by E461.

Belongs to the glycosyl hydrolase 13 family. GlgB subfamily. Monomer.

The enzyme catalyses Transfers a segment of a (1-&gt;4)-alpha-D-glucan chain to a primary hydroxy group in a similar glucan chain.. The protein operates within glycan biosynthesis; glycogen biosynthesis. Catalyzes the formation of the alpha-1,6-glucosidic linkages in glycogen by scission of a 1,4-alpha-linked oligosaccharide from growing alpha-1,4-glucan chains and the subsequent attachment of the oligosaccharide to the alpha-1,6 position. The polypeptide is 1,4-alpha-glucan branching enzyme GlgB 2 (Xanthomonas campestris pv. campestris (strain 8004)).